An 88-amino-acid chain; its full sequence is Phage-like element PBSX protein XkdR (88 aa).

It to B.subtilis YqbR.

In Bacillus subtilis (strain 168), this protein is Phage-like element PBSX protein XkdR (xkdR).